The chain runs to 223 residues: Kynurenine formamidase (223 aa).

Phenylalanine 34 provides a ligand contact to substrate. Zn(2+)-binding residues include histidine 64, histidine 68, and aspartate 70. The active-site Proton donor/acceptor is the histidine 74. Histidine 174 and glutamate 186 together coordinate Zn(2+).

The protein belongs to the Cyclase 1 superfamily. KynB family. In terms of assembly, homodimer. Requires Zn(2+) as cofactor.

The catalysed reaction is N-formyl-L-kynurenine + H2O = L-kynurenine + formate + H(+). It functions in the pathway amino-acid degradation; L-tryptophan degradation via kynurenine pathway; L-kynurenine from L-tryptophan: step 2/2. Functionally, catalyzes the hydrolysis of N-formyl-L-kynurenine to L-kynurenine, the second step in the kynurenine pathway of tryptophan degradation. The polypeptide is Kynurenine formamidase (Polaromonas naphthalenivorans (strain CJ2)).